A 955-amino-acid polypeptide reads, in one-letter code: GPI inositol-deacylase B (955 aa).

Asn-7 carries an N-linked (GlcNAc...) asparagine glycan. Residues 8 to 28 (ASVALWTVFTILTIWISFALH) form a helical membrane-spanning segment. Ser-180 is an active-site residue. Residue Asn-431 is glycosylated (N-linked (GlcNAc...) asparagine). 4 helical membrane-spanning segments follow: residues 489-509 (IAFP…SGGV), 600-620 (LLFS…FWRY), 643-663 (YLSW…FEFI), and 703-723 (PIGV…VVVV). An N-linked (GlcNAc...) asparagine glycan is attached at Asn-753. The next 3 membrane-spanning stretches (helical) occupy residues 772 to 792 (VIIA…LAFA), 840 to 860 (TMSV…AVWV), and 870 to 890 (IFSS…IENL). Asn-914 is a glycosylation site (N-linked (GlcNAc...) asparagine). A helical membrane pass occupies residues 919-939 (GMMHAFMIHHWFNLLAGWLLI). N-linked (GlcNAc...) asparagine glycosylation occurs at Asn-945.

The protein belongs to the GPI inositol-deacylase family.

It is found in the endoplasmic reticulum membrane. In terms of biological role, involved in inositol deacylation of GPI-anchored proteins which plays important roles in the quality control and ER-associated degradation of GPI-anchored proteins. This is GPI inositol-deacylase B (BST1B) from Yarrowia lipolytica (strain CLIB 122 / E 150) (Yeast).